The sequence spans 342 residues: Ribosomal RNA small subunit methyltransferase C (342 aa).

This sequence belongs to the methyltransferase superfamily. RsmC family. Monomer.

It localises to the cytoplasm. It carries out the reaction guanosine(1207) in 16S rRNA + S-adenosyl-L-methionine = N(2)-methylguanosine(1207) in 16S rRNA + S-adenosyl-L-homocysteine + H(+). In terms of biological role, specifically methylates the guanine in position 1207 of 16S rRNA in the 30S particle. This is Ribosomal RNA small subunit methyltransferase C from Aeromonas hydrophila subsp. hydrophila (strain ATCC 7966 / DSM 30187 / BCRC 13018 / CCUG 14551 / JCM 1027 / KCTC 2358 / NCIMB 9240 / NCTC 8049).